The chain runs to 254 residues: Serotonin N-acetyltransferase 1, chloroplastic (254 aa).

The N-terminal 83 residues, 1 to 83 (MASAASASAS…NSTETVEPPS (83 aa)), are a transit peptide targeting the chloroplast. The N-acetyltransferase domain maps to 119 to 254 (VNVYDLQALC…IKGMFWYPRF (136 aa)).

The protein localises to the plastid. The protein resides in the chloroplast. It is found in the nucleus. The enzyme catalyses a 2-arylethylamine + acetyl-CoA = an N-acetyl-2-arylethylamine + CoA + H(+). It functions in the pathway aromatic compound metabolism; melatonin biosynthesis; melatonin from serotonin: step 1/2. Its function is as follows. Catalyzes the N-acetylation of serotonin into N-acetylserotonin, the penultimate step in the synthesis of melatonin. Catalyzes in vitro the N-acetylation of tryptamine to produce N-acetyltryptamine, 5-methoxytryptamine to produce melatonin and tyramine to produce N-acetyltyramine. Acetyltransferase required for geminivirus infection and systemic spread. The polypeptide is Serotonin N-acetyltransferase 1, chloroplastic (Oryza sativa subsp. indica (Rice)).